The following is a 929-amino-acid chain: Isoleucine--tRNA ligase (929 aa).

The 'HIGH' region motif lies at 58-68; the sequence is PYANGDIHIGH. An L-isoleucyl-5'-AMP-binding site is contributed by glutamate 563. A 'KMSKS' region motif is present at residues 605–609; that stretch reads KMSKS. Lysine 608 serves as a coordination point for ATP. Zn(2+)-binding residues include cysteine 892, cysteine 895, cysteine 912, and cysteine 915.

It belongs to the class-I aminoacyl-tRNA synthetase family. IleS type 1 subfamily. As to quaternary structure, monomer. The cofactor is Zn(2+).

It localises to the cytoplasm. It carries out the reaction tRNA(Ile) + L-isoleucine + ATP = L-isoleucyl-tRNA(Ile) + AMP + diphosphate. Functionally, catalyzes the attachment of isoleucine to tRNA(Ile). As IleRS can inadvertently accommodate and process structurally similar amino acids such as valine, to avoid such errors it has two additional distinct tRNA(Ile)-dependent editing activities. One activity is designated as 'pretransfer' editing and involves the hydrolysis of activated Val-AMP. The other activity is designated 'posttransfer' editing and involves deacylation of mischarged Val-tRNA(Ile). This Neisseria meningitidis serogroup C / serotype 2a (strain ATCC 700532 / DSM 15464 / FAM18) protein is Isoleucine--tRNA ligase.